The following is a 163-amino-acid chain: HTH-type transcriptional regulator IscR (163 aa).

The region spanning 2–131 is the HTH rrf2-type domain; sequence RLTSKGRYAV…NNITLGELVN (130 aa). The segment at residues 28-51 is a DNA-binding region (H-T-H motif); the sequence is LADISERQGISLSYLEQLFSRLRK. Residues Cys-92, Cys-98, and Cys-104 each contribute to the [2Fe-2S] cluster site. Residues 140–149 are compositionally biased toward basic and acidic residues; that stretch reads DRQHTHDAPR. The disordered stretch occupies residues 140-163; sequence DRQHTHDAPRSTRTQDAIDVKLRA.

The cofactor is [2Fe-2S] cluster.

Regulates the transcription of several operons and genes involved in the biogenesis of Fe-S clusters and Fe-S-containing proteins. This Citrobacter koseri (strain ATCC BAA-895 / CDC 4225-83 / SGSC4696) protein is HTH-type transcriptional regulator IscR.